Here is a 234-residue protein sequence, read N- to C-terminus: GTP cyclohydrolase 1 type 2 homolog (234 aa).

A divalent metal cation is bound by residues histidine 61, histidine 62, aspartate 80, histidine 195, and glutamate 199.

It belongs to the GTP cyclohydrolase I type 2/NIF3 family. Homohexamer.

This Methanothermobacter thermautotrophicus (strain ATCC 29096 / DSM 1053 / JCM 10044 / NBRC 100330 / Delta H) (Methanobacterium thermoautotrophicum) protein is GTP cyclohydrolase 1 type 2 homolog.